A 240-amino-acid chain; its full sequence is uncharacterized protein (240 aa).

The C2H2-type zinc finger occupies 3–27 (LKCLECDKLLSSIEMAEFHSTKTSH). Disordered stretches follow at residues 21–43 (HSTK…RSPE) and 120–171 (AEIE…RFSI). Over residues 120-136 (AEIERDKKRRAAERENK) the composition is skewed to basic and acidic residues. Residues 155–166 (SSSTCTRTPPTS) show a composition bias toward low complexity.

This is an uncharacterized protein from Schizosaccharomyces pombe (strain 972 / ATCC 24843) (Fission yeast).